Consider the following 318-residue polypeptide: Beta-ketoacyl-[acyl-carrier-protein] synthase III (318 aa).

Residues C112 and H245 contribute to the active site. The interval Q246 to R250 is ACP-binding. Residue N275 is part of the active site.

Belongs to the thiolase-like superfamily. FabH family. In terms of assembly, homodimer.

Its subcellular location is the cytoplasm. The enzyme catalyses malonyl-[ACP] + acetyl-CoA + H(+) = 3-oxobutanoyl-[ACP] + CO2 + CoA. It functions in the pathway lipid metabolism; fatty acid biosynthesis. In terms of biological role, catalyzes the condensation reaction of fatty acid synthesis by the addition to an acyl acceptor of two carbons from malonyl-ACP. Catalyzes the first condensation reaction which initiates fatty acid synthesis and may therefore play a role in governing the total rate of fatty acid production. Possesses both acetoacetyl-ACP synthase and acetyl transacylase activities. Its substrate specificity determines the biosynthesis of branched-chain and/or straight-chain of fatty acids. This is Beta-ketoacyl-[acyl-carrier-protein] synthase III from Nitrosomonas europaea (strain ATCC 19718 / CIP 103999 / KCTC 2705 / NBRC 14298).